Consider the following 145-residue polypeptide: 3-dehydroquinate dehydratase (145 aa).

The Proton acceptor role is filled by Tyr-23. Asn-75, His-81, and Asp-88 together coordinate substrate. His-101 functions as the Proton donor in the catalytic mechanism. Residues 102 to 103 (LS) and Arg-112 each bind substrate.

This sequence belongs to the type-II 3-dehydroquinase family. Homododecamer.

The enzyme catalyses 3-dehydroquinate = 3-dehydroshikimate + H2O. It participates in metabolic intermediate biosynthesis; chorismate biosynthesis; chorismate from D-erythrose 4-phosphate and phosphoenolpyruvate: step 3/7. Its function is as follows. Catalyzes a trans-dehydration via an enolate intermediate. The chain is 3-dehydroquinate dehydratase from Legionella pneumophila (strain Lens).